A 245-amino-acid chain; its full sequence is tRNA (guanine-N(1)-)-methyltransferase (245 aa).

S-adenosyl-L-methionine is bound by residues Gly-108 and 127-132 (IGDYVL).

The protein belongs to the RNA methyltransferase TrmD family. Homodimer.

Its subcellular location is the cytoplasm. The catalysed reaction is guanosine(37) in tRNA + S-adenosyl-L-methionine = N(1)-methylguanosine(37) in tRNA + S-adenosyl-L-homocysteine + H(+). Its function is as follows. Specifically methylates guanosine-37 in various tRNAs. This is tRNA (guanine-N(1)-)-methyltransferase from Lactobacillus delbrueckii subsp. bulgaricus (strain ATCC 11842 / DSM 20081 / BCRC 10696 / JCM 1002 / NBRC 13953 / NCIMB 11778 / NCTC 12712 / WDCM 00102 / Lb 14).